A 653-amino-acid polypeptide reads, in one-letter code: DNA ligase (653 aa).

NAD(+)-binding positions include 32–36 and 80–81; these read NFEYD and SL. The N6-AMP-lysine intermediate role is filled by Lys104. NAD(+) is bound by residues Arg125, Glu159, and Lys297. Cys386, Cys389, Cys406, and Cys411 together coordinate Zn(2+). One can recognise a BRCT domain in the interval 571–653; the sequence is GGSEKLKGLT…EEFIQLLNEA (83 aa).

Belongs to the NAD-dependent DNA ligase family. LigA subfamily. Requires Mg(2+) as cofactor. Mn(2+) serves as cofactor.

It carries out the reaction NAD(+) + (deoxyribonucleotide)n-3'-hydroxyl + 5'-phospho-(deoxyribonucleotide)m = (deoxyribonucleotide)n+m + AMP + beta-nicotinamide D-nucleotide.. Functionally, DNA ligase that catalyzes the formation of phosphodiester linkages between 5'-phosphoryl and 3'-hydroxyl groups in double-stranded DNA using NAD as a coenzyme and as the energy source for the reaction. It is essential for DNA replication and repair of damaged DNA. The polypeptide is DNA ligase (Lachnoclostridium phytofermentans (strain ATCC 700394 / DSM 18823 / ISDg) (Clostridium phytofermentans)).